We begin with the raw amino-acid sequence, 130 residues long: MSGRGKQGGKTRAKSKTRSSRAGLQFPVGRVHRLLRKGNYAERVGAGAPVYLAAVLEYLTAEILELAWERLPEITKRPVLSPGTCNSLCNDEELNKLLGGVTIAQGGVLPNIQSVLLPKKTESSKSTKSK.

The segment at 1 to 22 is disordered; that stretch reads MSGRGKQGGKTRAKSKTRSSRA. Ser2 carries the post-translational modification N-acetylserine. Phosphoserine is present on Ser2. Lys6 is subject to N6-(2-hydroxyisobutyryl)lysine. An N6-acetyllysine modification is found at Lys6. The segment covering 7–19 has biased composition (basic residues); sequence QGGKTRAKSKTRS. Position 10 is an N6-(2-hydroxyisobutyryl)lysine; alternate (Lys10). The residue at position 10 (Lys10) is an N6-lactoyllysine; alternate. Lys10 is modified (N6-succinyllysine). Glycyl lysine isopeptide (Lys-Gly) (interchain with G-Cter in ubiquitin) cross-links involve residues Lys14 and Lys16. The residue at position 37 (Lys37) is an N6-(2-hydroxyisobutyryl)lysine; alternate. At Lys76 the chain carries N6-(2-hydroxyisobutyryl)lysine. At Lys96 the chain carries N6-(2-hydroxyisobutyryl)lysine; alternate. At Lys96 the chain carries N6-succinyllysine. N6-glutaryllysine; alternate is present on Lys96. Gln105 is modified (N5-methylglutamine). The residue at position 119 (Lys119) is an N6-(2-hydroxyisobutyryl)lysine; alternate. Lys119 is modified (N6-glutaryllysine; alternate). Lys120 is covalently cross-linked (Glycyl lysine isopeptide (Lys-Gly) (interchain with G-Cter in ubiquitin)).

The protein belongs to the histone H2A family. As to quaternary structure, the nucleosome is a histone octamer containing two molecules each of H2A, H2B, H3 and H4 assembled in one H3-H4 heterotetramer and two H2A-H2B heterodimers. The octamer wraps approximately 147 bp of DNA. In terms of processing, monoubiquitination of Lys-120 (H2AK119Ub) gives a specific tag for epigenetic transcriptional repression. Following DNA double-strand breaks (DSBs), it is ubiquitinated through 'Lys-63' linkage of ubiquitin moieties, leading to the recruitment of repair proteins to sites of DNA damage. H2AK119Ub and ionizing radiation-induced 'Lys-63'-linked ubiquitination are distinct events. Phosphorylation on Ser-2 is enhanced during mitosis. Phosphorylation on Ser-2 directly represses transcription. Post-translationally, glutamine methylation at Gln-105 (H2AQ104me) by FBL is specifically dedicated to polymerase I. It is present at 35S ribosomal DNA locus and impairs binding of the FACT complex.

It localises to the nucleus. It is found in the chromosome. In terms of biological role, core component of nucleosome. Nucleosomes wrap and compact DNA into chromatin, limiting DNA accessibility to the cellular machineries which require DNA as a template. Histones thereby play a central role in transcription regulation, DNA repair, DNA replication and chromosomal stability. DNA accessibility is regulated via a complex set of post-translational modifications of histones, also called histone code, and nucleosome remodeling. In Xenopus laevis (African clawed frog), this protein is Histone H2A type 2.